The following is a 78-amino-acid chain: Large ribosomal subunit protein bL28 (78 aa).

Residues 1-20 (MSRVCQVTGKGPVTGNNISH) form a disordered region.

This sequence belongs to the bacterial ribosomal protein bL28 family.

This is Large ribosomal subunit protein bL28 from Pseudomonas putida (strain W619).